Here is a 204-residue protein sequence, read N- to C-terminus: CDP-archaeol synthase (204 aa).

6 helical membrane-spanning segments follow: residues 5 to 25 (VYACFLGLYFLVFSLIVYVIL), 43 to 63 (MLWVLPAYVANASPVVFSRLV), 91 to 111 (FEGFLGGMLSGVLVGILLAYA), 116 to 136 (GVSAFLLPLGALLGDLGGAFV), 147 to 167 (PAILLDQLDFVAGALILQGLF), and 175 to 195 (VVVAVVLLTPIVHLLTNMAAF).

It belongs to the CDP-archaeol synthase family. Requires Mg(2+) as cofactor.

It is found in the cell membrane. It catalyses the reaction 2,3-bis-O-(geranylgeranyl)-sn-glycerol 1-phosphate + CTP + H(+) = CDP-2,3-bis-O-(geranylgeranyl)-sn-glycerol + diphosphate. The protein operates within membrane lipid metabolism; glycerophospholipid metabolism. Its function is as follows. Catalyzes the formation of CDP-2,3-bis-(O-geranylgeranyl)-sn-glycerol (CDP-archaeol) from 2,3-bis-(O-geranylgeranyl)-sn-glycerol 1-phosphate (DGGGP) and CTP. This reaction is the third ether-bond-formation step in the biosynthesis of archaeal membrane lipids. This is CDP-archaeol synthase from Thermofilum pendens (strain DSM 2475 / Hrk 5).